The sequence spans 176 residues: ATP-dependent protease subunit HslV (176 aa).

Threonine 6 is a catalytic residue. Serine 161, cysteine 164, and threonine 167 together coordinate Na(+).

The protein belongs to the peptidase T1B family. HslV subfamily. A double ring-shaped homohexamer of HslV is capped on each side by a ring-shaped HslU homohexamer. The assembly of the HslU/HslV complex is dependent on binding of ATP.

It localises to the cytoplasm. The enzyme catalyses ATP-dependent cleavage of peptide bonds with broad specificity.. Allosterically activated by HslU binding. Protease subunit of a proteasome-like degradation complex believed to be a general protein degrading machinery. The sequence is that of ATP-dependent protease subunit HslV from Thermosipho africanus (strain TCF52B).